A 454-amino-acid polypeptide reads, in one-letter code: Serine/arginine (SR)-type shuttling mRNA binding protein HRB1 (454 aa).

The segment at 1-141 (MSDQERGSEN…SSGARGDYGP (141 aa)) is disordered. Over residues 14–24 (SRSRSRSPVRR) the composition is skewed to basic residues. Basic and acidic residues-rich tracts occupy residues 25–38 (RMSD…DNHL) and 50–113 (KFAD…DYPR). R127 is subject to Omega-N-methylarginine. RRM domains are found at residues 161–237 (NSIF…QDNP) and 261–338 (HEVI…SKES). Residues S338, S343, and S355 each carry the phosphoserine modification. The RRM 3 domain occupies 376–453 (RLIYCSNLPF…CDLDISYAKR (78 aa)).

In terms of processing, methylated by HMT1.

Its subcellular location is the cytoplasm. It is found in the nucleus. The protein resides in the P-body. It localises to the stress granule. In terms of biological role, binds to intron-containing transcripts and is involved in quality control for the export of spliced mRNAs from the nucleus. Binds to pre-mRNAs until splicing is completed or until faulty mRNAs are degraded. On correctly spliced mRNAs, GBP2 and HRB1 recruit MEX67 to allow nuclear export. On faulty mRNAs, GBP2 and HRB1 associate with the TRAMP complex that guides those pre-mRNAs to the exosome for degradation. This Saccharomyces cerevisiae (strain ATCC 204508 / S288c) (Baker's yeast) protein is Serine/arginine (SR)-type shuttling mRNA binding protein HRB1.